Here is a 37-residue protein sequence, read N- to C-terminus: Large ribosomal subunit protein bL36c (37 aa).

Belongs to the bacterial ribosomal protein bL36 family.

It localises to the plastid. It is found in the chloroplast. This Pinus koraiensis (Korean pine) protein is Large ribosomal subunit protein bL36c.